The following is a 244-amino-acid chain: 1-(5-phosphoribosyl)-5-[(5-phosphoribosylamino)methylideneamino] imidazole-4-carboxamide isomerase (244 aa).

The active-site Proton acceptor is the Asp8. Catalysis depends on Asp130, which acts as the Proton donor.

The protein belongs to the HisA/HisF family.

The protein resides in the cytoplasm. The catalysed reaction is 1-(5-phospho-beta-D-ribosyl)-5-[(5-phospho-beta-D-ribosylamino)methylideneamino]imidazole-4-carboxamide = 5-[(5-phospho-1-deoxy-D-ribulos-1-ylimino)methylamino]-1-(5-phospho-beta-D-ribosyl)imidazole-4-carboxamide. It participates in amino-acid biosynthesis; L-histidine biosynthesis; L-histidine from 5-phospho-alpha-D-ribose 1-diphosphate: step 4/9. This is 1-(5-phosphoribosyl)-5-[(5-phosphoribosylamino)methylideneamino] imidazole-4-carboxamide isomerase from Hahella chejuensis (strain KCTC 2396).